The following is a 138-amino-acid chain: Acidic phospholipase A2 Tpu-E6a (138 aa).

Residues 1-16 (MRTLWIMAVLLLGVKG) form the signal peptide. 7 disulfides stabilise this stretch: cysteine 42–cysteine 131, cysteine 44–cysteine 60, cysteine 59–cysteine 111, cysteine 65–cysteine 138, cysteine 66–cysteine 104, cysteine 73–cysteine 97, and cysteine 91–cysteine 102. Residues tyrosine 43, glycine 45, and glycine 47 each coordinate Ca(2+). Histidine 63 is a catalytic residue. Aspartate 64 lines the Ca(2+) pocket. Residue aspartate 105 is part of the active site.

Monomer. It depends on Ca(2+) as a cofactor. In terms of tissue distribution, expressed by the venom gland.

The protein resides in the secreted. It carries out the reaction a 1,2-diacyl-sn-glycero-3-phosphocholine + H2O = a 1-acyl-sn-glycero-3-phosphocholine + a fatty acid + H(+). In terms of biological role, snake venom phospholipase A2 (PLA2) that impairs hemostasis. It weakly inhibits ADP-induced platelet aggregation when tested on platelet rich plasma from human and rabbit blood (15-25% of inhibition at 5-10 ug of enzyme), and dose-dependently inhibits blood coagulation, possibly by inhibiting thrombin activation. Exhibits high hydrolytic activities toward L-dipalmitoyl phosphatidylcholine. PLA2 catalyzes the calcium-dependent hydrolysis of the 2-acyl groups in 3-sn-phosphoglycerides. In Craspedocephalus puniceus (Flat-nosed pitviper), this protein is Acidic phospholipase A2 Tpu-E6a.